The following is a 660-amino-acid chain: Bifunctional polymyxin resistance protein ArnA (660 aa).

Positions 1 to 304 (MKTVVFAYHD…TLGLVQGSRL (304 aa)) are formyltransferase ArnAFT. Residue 86–88 (HLI) participates in (6R)-10-formyltetrahydrofolate binding. Residue His-104 is the Proton donor; for formyltransferase activity of the active site. (6R)-10-formyltetrahydrofolate is bound by residues Arg-114 and 136–140 (VKRAD). Positions 314–660 (RRTRVLILGV…RTVDLTDKPS (347 aa)) are dehydrogenase ArnADH. NAD(+) is bound by residues Asp-347 and 368 to 369 (DI). UDP-alpha-D-glucuronate contacts are provided by residues Ala-393, Tyr-398, and 432 to 433 (TS). The active-site Proton acceptor; for decarboxylase activity is Glu-434. UDP-alpha-D-glucuronate is bound by residues Arg-460, Asn-492, 526–535 (KLIDGGKQKR), and Tyr-613. The active-site Proton donor; for decarboxylase activity is the Arg-619.

This sequence in the N-terminal section; belongs to the Fmt family. UDP-L-Ara4N formyltransferase subfamily. In the C-terminal section; belongs to the NAD(P)-dependent epimerase/dehydratase family. UDP-glucuronic acid decarboxylase subfamily. Homohexamer, formed by a dimer of trimers.

It carries out the reaction UDP-alpha-D-glucuronate + NAD(+) = UDP-beta-L-threo-pentopyranos-4-ulose + CO2 + NADH. The enzyme catalyses UDP-4-amino-4-deoxy-beta-L-arabinose + (6R)-10-formyltetrahydrofolate = UDP-4-deoxy-4-formamido-beta-L-arabinose + (6S)-5,6,7,8-tetrahydrofolate + H(+). It participates in nucleotide-sugar biosynthesis; UDP-4-deoxy-4-formamido-beta-L-arabinose biosynthesis; UDP-4-deoxy-4-formamido-beta-L-arabinose from UDP-alpha-D-glucuronate: step 1/3. It functions in the pathway nucleotide-sugar biosynthesis; UDP-4-deoxy-4-formamido-beta-L-arabinose biosynthesis; UDP-4-deoxy-4-formamido-beta-L-arabinose from UDP-alpha-D-glucuronate: step 3/3. The protein operates within bacterial outer membrane biogenesis; lipopolysaccharide biosynthesis. Functionally, bifunctional enzyme that catalyzes the oxidative decarboxylation of UDP-glucuronic acid (UDP-GlcUA) to UDP-4-keto-arabinose (UDP-Ara4O) and the addition of a formyl group to UDP-4-amino-4-deoxy-L-arabinose (UDP-L-Ara4N) to form UDP-L-4-formamido-arabinose (UDP-L-Ara4FN). The modified arabinose is attached to lipid A and is required for resistance to polymyxin and cationic antimicrobial peptides. This is Bifunctional polymyxin resistance protein ArnA from Escherichia coli O157:H7.